The sequence spans 65 residues: Large ribosomal subunit protein uL29 (65 aa).

The protein belongs to the universal ribosomal protein uL29 family.

This chain is Large ribosomal subunit protein uL29, found in Acinetobacter baylyi (strain ATCC 33305 / BD413 / ADP1).